Consider the following 227-residue polypeptide: 7-cyano-7-deazaguanine synthase (227 aa).

10–20 contributes to the ATP binding site; it reads LSGGLDSCVAT. Residues cysteine 193, cysteine 201, cysteine 204, and cysteine 207 each contribute to the Zn(2+) site.

It belongs to the QueC family. It depends on Zn(2+) as a cofactor.

The enzyme catalyses 7-carboxy-7-deazaguanine + NH4(+) + ATP = 7-cyano-7-deazaguanine + ADP + phosphate + H2O + H(+). It functions in the pathway purine metabolism; 7-cyano-7-deazaguanine biosynthesis. Its function is as follows. Catalyzes the ATP-dependent conversion of 7-carboxy-7-deazaguanine (CDG) to 7-cyano-7-deazaguanine (preQ(0)). This chain is 7-cyano-7-deazaguanine synthase, found in Methanobrevibacter smithii (strain ATCC 35061 / DSM 861 / OCM 144 / PS).